We begin with the raw amino-acid sequence, 293 residues long: Dehydrodolichyl diphosphate synthase complex subunit NUS1 (293 aa).

The next 3 helical transmembrane spans lie at 1–23, 35–56, and 117–135; these read MTGLYELVWRVLHALLCLHRTLT, WIWRRCCRAASAAVLAPLGFTL, and IASLVVWCMAVGISYISVY. Residues Asn-144 and Asn-271 are each glycosylated (N-linked (GlcNAc...) asparagine). The RXG motif; crucial for prenyltransferase activity motif lies at 290 to 292; sequence RLG. The isopentenyl diphosphate site is built by Leu-291 and Gly-292.

It belongs to the UPP synthase family. The active dehydrodolichyl diphosphate synthase complex is a heterotetramer composed of a dimer of heterodimer of DHDDS and NUS1. Interacts with NPC2. Mg(2+) serves as cofactor.

Its subcellular location is the endoplasmic reticulum membrane. It carries out the reaction n isopentenyl diphosphate + (2E,6E)-farnesyl diphosphate = a di-trans,poly-cis-polyprenyl diphosphate + n diphosphate. It participates in protein modification; protein glycosylation. It functions in the pathway lipid metabolism. Its activity is regulated as follows. Activated by phospholipids including cardiolipin, phosphatidylcholine, phosphatidylethanolamine, phosphatidylinositol and phosphatidylserine. Its function is as follows. With DHDDS, forms the dehydrodolichyl diphosphate synthase (DDS) complex, an essential component of the dolichol monophosphate (Dol-P) biosynthetic machinery. Both subunits contribute to enzymatic activity, i.e. condensation of multiple copies of isopentenyl pyrophosphate (IPP) to farnesyl pyrophosphate (FPP) to produce dehydrodolichyl diphosphate (Dedol-PP), a precursor of dolichol phosphate which is utilized as a sugar carrier in protein glycosylation in the endoplasmic reticulum (ER). Synthesizes long-chain polyprenols, mostly of C95 and C100 chain length. Regulates the glycosylation and stability of nascent NPC2, thereby promoting trafficking of LDL-derived cholesterol. Acts as a specific receptor for the N-terminus of Nogo-B, a neural and cardiovascular regulator. The polypeptide is Dehydrodolichyl diphosphate synthase complex subunit NUS1 (Homo sapiens (Human)).